The chain runs to 400 residues: Argininosuccinate synthase (400 aa).

ATP contacts are provided by residues A10–S18 and A38. Position 89 (Y89) interacts with L-citrulline. Residue G119 coordinates ATP. 3 residues coordinate L-aspartate: T121, N125, and D126. L-citrulline is bound at residue N125. R129, S177, S186, E262, and Y274 together coordinate L-citrulline.

It belongs to the argininosuccinate synthase family. Type 1 subfamily. Homotetramer.

The protein localises to the cytoplasm. It catalyses the reaction L-citrulline + L-aspartate + ATP = 2-(N(omega)-L-arginino)succinate + AMP + diphosphate + H(+). It participates in amino-acid biosynthesis; L-arginine biosynthesis; L-arginine from L-ornithine and carbamoyl phosphate: step 2/3. With respect to regulation, activity decreases to 53.9% and 18.4% in the presence of 1 mM and 5 mM arginine, respectively. Activity also decreases to 80.1%, 78.1% and 92.1% in the presence of 5 mM ornithine, lysine and succinate, respectively. Activity does not decrease in the presence of glutamate, glutamine or asparagine. Its function is as follows. Catalyzes the condensation of citrulline and aspartate into argininosuccinate, the immediate precursor of arginine. SyArgG is the rate-limiting step in arginine biosynthesis in Synechocystis PCC 6803. The protein is Argininosuccinate synthase of Synechocystis sp. (strain ATCC 27184 / PCC 6803 / Kazusa).